Consider the following 235-residue polypeptide: Octanoyltransferase (235 aa).

The 177-residue stretch at 59-235 (PGSSQAVWLL…KKSLTERFGL (177 aa)) folds into the BPL/LPL catalytic domain. Residues 101-108 (RGGEVTHH), 168-170 (SIG), and 181-183 (GLS) contribute to the substrate site. The Acyl-thioester intermediate role is filled by C199.

The protein belongs to the LipB family.

It localises to the cytoplasm. It carries out the reaction octanoyl-[ACP] + L-lysyl-[protein] = N(6)-octanoyl-L-lysyl-[protein] + holo-[ACP] + H(+). It functions in the pathway protein modification; protein lipoylation via endogenous pathway; protein N(6)-(lipoyl)lysine from octanoyl-[acyl-carrier-protein]: step 1/2. Functionally, catalyzes the transfer of endogenously produced octanoic acid from octanoyl-acyl-carrier-protein onto the lipoyl domains of lipoate-dependent enzymes. Lipoyl-ACP can also act as a substrate although octanoyl-ACP is likely to be the physiological substrate. This is Octanoyltransferase from Prochlorococcus marinus (strain MIT 9211).